The sequence spans 342 residues: L-threonine 3-dehydrogenase (342 aa).

Cys-38 provides a ligand contact to Zn(2+). Catalysis depends on charge relay system residues Thr-40 and His-43. His-63, Glu-64, Cys-93, Cys-96, Cys-99, and Cys-107 together coordinate Zn(2+). NAD(+) is bound by residues Ile-175, Asp-195, Arg-200, 262-264, and 286-287; these read LGI and IY.

It belongs to the zinc-containing alcohol dehydrogenase family. Homotetramer. The cofactor is Zn(2+).

Its subcellular location is the cytoplasm. It carries out the reaction L-threonine + NAD(+) = (2S)-2-amino-3-oxobutanoate + NADH + H(+). It functions in the pathway amino-acid degradation; L-threonine degradation via oxydo-reductase pathway; glycine from L-threonine: step 1/2. Functionally, catalyzes the NAD(+)-dependent oxidation of L-threonine to 2-amino-3-ketobutyrate. This Burkholderia ambifaria (strain MC40-6) protein is L-threonine 3-dehydrogenase.